A 335-amino-acid chain; its full sequence is Carboxylesterase 1 (335 aa).

The Involved in the stabilization of the negatively charged intermediate by the formation of the oxyanion hole motif lies at 90–92 (HGG). Residues 92-93 (GG), Ser-169, and Ala-170 each bind paraoxon. The active site involves Ser-169. Residues Asp-276 and His-306 contribute to the active site.

This sequence belongs to the 'GDXG' lipolytic enzyme family.

It carries out the reaction a carboxylic ester + H2O = an alcohol + a carboxylate + H(+). Is inhibited by the organophosphates paraoxon and dimethylchlorophosphate (DMCP). Carboxylesterase acting on esters with varying acyl chain length. This Actinidia eriantha (Velvet vine) protein is Carboxylesterase 1 (CXE1).